The following is a 164-amino-acid chain: Nucleotide-binding protein EF_1165 (164 aa).

Belongs to the YajQ family.

In terms of biological role, nucleotide-binding protein. The sequence is that of Nucleotide-binding protein EF_1165 from Enterococcus faecalis (strain ATCC 700802 / V583).